A 334-amino-acid chain; its full sequence is DNA-directed RNA polymerase subunit alpha (334 aa).

The segment at 1-234 is alpha N-terminal domain (alpha-NTD); it reads MQTKVNELLK…SQLAAFVELQ (234 aa). The tract at residues 248–334 is alpha C-terminal domain (alpha-CTD); it reads IDPILLRPVD…LKDQDKKASG (87 aa).

The protein belongs to the RNA polymerase alpha chain family. Homodimer. The RNAP catalytic core consists of 2 alpha, 1 beta, 1 beta' and 1 omega subunit. When a sigma factor is associated with the core the holoenzyme is formed, which can initiate transcription.

It carries out the reaction RNA(n) + a ribonucleoside 5'-triphosphate = RNA(n+1) + diphosphate. DNA-dependent RNA polymerase catalyzes the transcription of DNA into RNA using the four ribonucleoside triphosphates as substrates. The polypeptide is DNA-directed RNA polymerase subunit alpha (Thioalkalivibrio sulfidiphilus (strain HL-EbGR7)).